Here is a 146-residue protein sequence, read N- to C-terminus: Hemoglobin subunit beta-1 (146 aa).

Ser1 is subject to N-acetylserine. The region spanning 2–146 is the Globin domain; the sequence is FLSAEEKGLV…VASALAHRYH (145 aa). Position 17 is an N6-succinyllysine (Lys17). A phosphoserine mark is found at Ser44 and Ser50. Residue Lys59 is modified to N6-succinyllysine. His63 and His92 together coordinate heme b. The residue at position 104 (Arg104) is an Asymmetric dimethylarginine.

This sequence belongs to the globin family. As to quaternary structure, heterotetramer of two alpha chains and two beta chains. Red blood cells.

In terms of biological role, involved in oxygen transport from the lung to the various peripheral tissues. This Panthera leo (Lion) protein is Hemoglobin subunit beta-1 (HBB1).